The sequence spans 165 residues: Crossover junction endodeoxyribonuclease RuvC (165 aa).

Active-site residues include D8, E67, and D139. The Mg(2+) site is built by D8, E67, and D139.

Belongs to the RuvC family. In terms of assembly, homodimer which binds Holliday junction (HJ) DNA. The HJ becomes 2-fold symmetrical on binding to RuvC with unstacked arms; it has a different conformation from HJ DNA in complex with RuvA. In the full resolvosome a probable DNA-RuvA(4)-RuvB(12)-RuvC(2) complex forms which resolves the HJ. Mg(2+) is required as a cofactor.

It localises to the cytoplasm. The catalysed reaction is Endonucleolytic cleavage at a junction such as a reciprocal single-stranded crossover between two homologous DNA duplexes (Holliday junction).. The RuvA-RuvB-RuvC complex processes Holliday junction (HJ) DNA during genetic recombination and DNA repair. Endonuclease that resolves HJ intermediates. Cleaves cruciform DNA by making single-stranded nicks across the HJ at symmetrical positions within the homologous arms, yielding a 5'-phosphate and a 3'-hydroxyl group; requires a central core of homology in the junction. The consensus cleavage sequence is 5'-(A/T)TT(C/G)-3'. Cleavage occurs on the 3'-side of the TT dinucleotide at the point of strand exchange. HJ branch migration catalyzed by RuvA-RuvB allows RuvC to scan DNA until it finds its consensus sequence, where it cleaves and resolves the cruciform DNA. In Alkalilimnicola ehrlichii (strain ATCC BAA-1101 / DSM 17681 / MLHE-1), this protein is Crossover junction endodeoxyribonuclease RuvC.